Here is a 332-residue protein sequence, read N- to C-terminus: Tetraacyldisaccharide 4'-kinase (332 aa).

55–62 (GVGGSGKT) is a binding site for ATP.

This sequence belongs to the LpxK family.

It catalyses the reaction a lipid A disaccharide + ATP = a lipid IVA + ADP + H(+). Its pathway is glycolipid biosynthesis; lipid IV(A) biosynthesis; lipid IV(A) from (3R)-3-hydroxytetradecanoyl-[acyl-carrier-protein] and UDP-N-acetyl-alpha-D-glucosamine: step 6/6. In terms of biological role, transfers the gamma-phosphate of ATP to the 4'-position of a tetraacyldisaccharide 1-phosphate intermediate (termed DS-1-P) to form tetraacyldisaccharide 1,4'-bis-phosphate (lipid IVA). The protein is Tetraacyldisaccharide 4'-kinase of Acidithiobacillus ferrooxidans (strain ATCC 53993 / BNL-5-31) (Leptospirillum ferrooxidans (ATCC 53993)).